A 269-amino-acid chain; its full sequence is MGQKINPHGFRLGVTTDHKTRWYAEKQYAELVGEDVKIREWLHKNLERAGLSSIEIERRSERVTIFLYAARPGIVIGRNGAEAERVRGELEKLTGKQIQLNILEVKSPETDAQLVAQGIAEQLAARVAFRRAMRKAQQSAMNAGALGIRIKCSGRLGGAEMSRSEGYREGRVPLHTLRADIDYGFFEARTTFGRIGVKVWIYKGDVTGTRAERAAQKAARQAAQGGRGGRGGNRRGRGDRPDRRGGRRRAEAAKQSAETPAPQTENAGA.

The KH type-2 domain maps to 38–106 (IREWLHKNLE…QIQLNILEVK (69 aa)). The segment at 215–269 (AQKAARQAAQGGRGGRGGNRRGRGDRPDRRGGRRRAEAAKQSAETPAPQTENAGA) is disordered. Residues 236–252 (GRGDRPDRRGGRRRAEA) show a composition bias toward basic and acidic residues. Residues 256–269 (SAETPAPQTENAGA) show a composition bias toward polar residues.

This sequence belongs to the universal ribosomal protein uS3 family. As to quaternary structure, part of the 30S ribosomal subunit. Forms a tight complex with proteins S10 and S14.

In terms of biological role, binds the lower part of the 30S subunit head. Binds mRNA in the 70S ribosome, positioning it for translation. The protein is Small ribosomal subunit protein uS3 of Cutibacterium acnes (strain DSM 16379 / KPA171202) (Propionibacterium acnes).